A 1659-amino-acid chain; its full sequence is Intersectin-2 (1659 aa).

The EH 1 domain occupies 22–110 (ERTKHDKQFD…PIMKQPPMFS (89 aa)). Positions 54–89 (LPAPVLAEIWALSDLNKDGKMDQQEFSIAMKLIKLK) constitute an EF-hand 1 domain. Ca(2+) is bound by residues aspartate 67, asparagine 69, aspartate 71, lysine 73, and glutamate 78. Serine 110, serine 211, and serine 231 each carry phosphoserine. The segment covering 220-231 (STSSTASLSGNS) has biased composition (low complexity). The tract at residues 220 to 242 (STSSTASLSGNSPKTGTSEWAVP) is disordered. The 90-residue stretch at 245-334 (SRLKYRQKFN…PELVPPSFRG (90 aa)) folds into the EH 2 domain. Positions 278–313 (LSQTQLATIWTLADIDGDGQLKAEEFILAMHLTDMA) constitute an EF-hand 2 domain. Residues 335–382 (GKQVDSVNGTLPSYQKTQEEEPQKKLPVTFEDKRKANYERGNMELEKR) are disordered. A compositionally biased stretch (polar residues) spans 339 to 350 (DSVNGTLPSYQK). Over residues 351–382 (TQEEEPQKKLPVTFEDKRKANYERGNMELEKR) the composition is skewed to basic and acidic residues. Positions 365-717 (EDKRKANYER…KAEAKQSETA (353 aa)) form a coiled coil. Tyrosine 554 bears the Phosphotyrosine mark. A Phosphothreonine modification is found at threonine 574. Residues 689-713 (KQKRLQEEKSQDKTQEEERKAEAKQ) are compositionally biased toward basic and acidic residues. A disordered region spans residues 689 to 715 (KQKRLQEEKSQDKTQEEERKAEAKQSE). An SH3 1 domain is found at 718–779 (SALVNYRALY…PCNYVEKVLS (62 aa)). At threonine 836 the chain carries Phosphothreonine. 2 positions are modified to phosphoserine: serine 838 and serine 843. An SH3 2 domain is found at 852–910 (VENLKAQALCSWTAKKENHLNFSKHDVITVLEQQENWWFGEVHGGRGWFPKSYVKLIPG). Tyrosine 922 carries the phosphotyrosine modification. SH3 domains follow at residues 942-1000 (PVGE…PKDQ), 1014-1078 (KKPE…LLGP), and 1088-1147 (HAVC…MTTD). The DH domain maps to 1170-1357 (KRQGYIHELI…EELCSQVNEG (188 aa)). One can recognise a PH domain in the interval 1396–1506 (KLLHSGKLYK…WVQKIKGASE (111 aa)). In terms of domain architecture, C2 spans 1514–1630 (KKREKAYQAR…RTEQESKGPT (117 aa)). Aspartate 1602, serine 1605, and aspartate 1608 together coordinate Ca(2+).

As to quaternary structure, belongs to a complex that may contain multimers of ITSN1, ITSN2 and EPS15, and different partners according to the step in the endocytic process. Interacts with ADAM15. Interacts with FASLG. Interacts with ANKRD54. Interacts with FCHO2. Ca(2+) serves as cofactor. As to expression, widely expressed in adult tissues.

It localises to the cytoplasm. Its function is as follows. Adapter protein that may provide indirect link between the endocytic membrane traffic and the actin assembly machinery. May regulate the formation of clathrin-coated vesicles (CCPs). Seems to be involved in CCPs maturation including invagination or budding. Involved in endocytosis of integrin beta-1 (ITGB1) and transferrin receptor (TFR). Plays a role in dendrite formation by melanocytes. This Mus musculus (Mouse) protein is Intersectin-2 (Itsn2).